Here is a 520-residue protein sequence, read N- to C-terminus: 6-phosphofructo-2-kinase/fructose-2,6-bisphosphatase 3 (520 aa).

The interval 1-245 (MPLELTQSRV…VYYLMNIHVQ (245 aa)) is 6-phosphofructo-2-kinase. 42-50 (GLPARGKTY) lines the ATP pocket. Arg-75 and Arg-99 together coordinate beta-D-fructose 6-phosphate. Residue Asp-125 is part of the active site. Positions 127 and 133 each coordinate beta-D-fructose 6-phosphate. Cys-155 is an active-site residue. Residue 164-169 (NIMEVK) participates in ATP binding. The beta-D-fructose 6-phosphate site is built by Lys-169, Arg-190, and Tyr-194. The tract at residues 246-520 (PRTIYLCRHG…RSSADSSRKH (275 aa)) is fructose-2,6-bisphosphatase. Arg-253 contributes to the beta-D-fructose 2,6-bisphosphate binding site. Catalysis depends on His-254, which acts as the Tele-phosphohistidine intermediate. The beta-D-fructose 2,6-bisphosphate site is built by Asn-260 and Gly-266. The active-site Proton donor/acceptor is Glu-323. Positions 334, 348, 352, 363, 389, and 393 each coordinate beta-D-fructose 2,6-bisphosphate. 345–348 (YALR) contributes to the ATP binding site. ATP is bound by residues 389–393 (QAVLR) and Tyr-425. Residues 443–520 (RERSEDAKKG…RSSADSSRKH (78 aa)) form a disordered region. Ser-461 is modified (phosphoserine; by AMPK). Thr-463 carries the phosphothreonine modification. Ser-467 bears the Phosphoserine mark. Phosphothreonine; by PKC is present on Thr-471. A compositionally biased stretch (polar residues) spans 502–520 (LPGQNMKGSRSSADSSRKH).

The protein in the C-terminal section; belongs to the phosphoglycerate mutase family. In terms of assembly, homodimer. Forms a heterodimer with PFKFB2. Post-translationally, phosphorylation by AMPK stimulates activity. Ubiquitous.

It carries out the reaction beta-D-fructose 2,6-bisphosphate + H2O = beta-D-fructose 6-phosphate + phosphate. The enzyme catalyses beta-D-fructose 6-phosphate + ATP = beta-D-fructose 2,6-bisphosphate + ADP + H(+). Its function is as follows. Catalyzes both the synthesis and degradation of fructose 2,6-bisphosphate. This chain is 6-phosphofructo-2-kinase/fructose-2,6-bisphosphatase 3 (PFKFB3), found in Homo sapiens (Human).